We begin with the raw amino-acid sequence, 912 residues long: Protein translocase subunit SecA (912 aa).

ATP-binding positions include Gln-87, 105–109 (GEGKT), and Asp-508. Positions 865-912 (DEEAAQVQSGNAPVPVSQVTRDEPKVGRNDPCPCGSGKKYKHCHGQLS) are disordered. The Zn(2+) site is built by Cys-896, Cys-898, Cys-907, and His-908. Over residues 902-912 (KKYKHCHGQLS) the composition is skewed to basic residues.

The protein belongs to the SecA family. As to quaternary structure, monomer and homodimer. Part of the essential Sec protein translocation apparatus which comprises SecA, SecYEG and auxiliary proteins SecDF-YajC and YidC. Zn(2+) serves as cofactor.

The protein resides in the cell inner membrane. It localises to the cytoplasm. The catalysed reaction is ATP + H2O + cellular proteinSide 1 = ADP + phosphate + cellular proteinSide 2.. Its function is as follows. Part of the Sec protein translocase complex. Interacts with the SecYEG preprotein conducting channel. Has a central role in coupling the hydrolysis of ATP to the transfer of proteins into and across the cell membrane, serving both as a receptor for the preprotein-SecB complex and as an ATP-driven molecular motor driving the stepwise translocation of polypeptide chains across the membrane. This chain is Protein translocase subunit SecA, found in Xanthomonas oryzae pv. oryzae (strain MAFF 311018).